The following is a 270-amino-acid chain: Putative pyruvate, phosphate dikinase regulatory protein (270 aa).

153–160 is a binding site for ADP; it reads GVSRTSKT.

Belongs to the pyruvate, phosphate/water dikinase regulatory protein family. PDRP subfamily.

The enzyme catalyses N(tele)-phospho-L-histidyl/L-threonyl-[pyruvate, phosphate dikinase] + ADP = N(tele)-phospho-L-histidyl/O-phospho-L-threonyl-[pyruvate, phosphate dikinase] + AMP + H(+). It catalyses the reaction N(tele)-phospho-L-histidyl/O-phospho-L-threonyl-[pyruvate, phosphate dikinase] + phosphate + H(+) = N(tele)-phospho-L-histidyl/L-threonyl-[pyruvate, phosphate dikinase] + diphosphate. Bifunctional serine/threonine kinase and phosphorylase involved in the regulation of the pyruvate, phosphate dikinase (PPDK) by catalyzing its phosphorylation/dephosphorylation. The sequence is that of Putative pyruvate, phosphate dikinase regulatory protein from Halalkalibacterium halodurans (strain ATCC BAA-125 / DSM 18197 / FERM 7344 / JCM 9153 / C-125) (Bacillus halodurans).